Reading from the N-terminus, the 95-residue chain is Co-chaperonin GroES (95 aa).

It belongs to the GroES chaperonin family. In terms of assembly, heptamer of 7 subunits arranged in a ring. Interacts with the chaperonin GroEL.

Its subcellular location is the cytoplasm. Its function is as follows. Together with the chaperonin GroEL, plays an essential role in assisting protein folding. The GroEL-GroES system forms a nano-cage that allows encapsulation of the non-native substrate proteins and provides a physical environment optimized to promote and accelerate protein folding. GroES binds to the apical surface of the GroEL ring, thereby capping the opening of the GroEL channel. This is Co-chaperonin GroES from Rickettsia typhi (strain ATCC VR-144 / Wilmington).